The chain runs to 697 residues: Elongation factor G (697 aa).

Residues 8–290 (ERYRNFGIMA…AVVDYLPSPL (283 aa)) enclose the tr-type G domain. GTP-binding positions include 17–24 (AHIDAGKT), 88–92 (DTPGH), and 142–145 (NKLD).

It belongs to the TRAFAC class translation factor GTPase superfamily. Classic translation factor GTPase family. EF-G/EF-2 subfamily.

It localises to the cytoplasm. Its function is as follows. Catalyzes the GTP-dependent ribosomal translocation step during translation elongation. During this step, the ribosome changes from the pre-translocational (PRE) to the post-translocational (POST) state as the newly formed A-site-bound peptidyl-tRNA and P-site-bound deacylated tRNA move to the P and E sites, respectively. Catalyzes the coordinated movement of the two tRNA molecules, the mRNA and conformational changes in the ribosome. This Sphingopyxis alaskensis (strain DSM 13593 / LMG 18877 / RB2256) (Sphingomonas alaskensis) protein is Elongation factor G.